The sequence spans 215 residues: MGIRAQQKEKTRRSLVEAAFSQLSAERSFASLSLREVAREAGIAPTSFYRHFRDVDELGLTMVDESGLMLRQLMRQARQRIAKGGSVIRTSVSTFMEFIGNNPNAFRLLLRERSGTSAAFRAAVAREIQHFIAELADYLELENHMPRAFTEAQAEAMVTIVFSAGAEALDVGVEQRRQLEERLVLQLRMISKGAYYWYRREQEKTAIIPGNVKDE.

Positions 10-70 constitute an HTH tetR-type domain; sequence KTRRSLVEAA…TMVDESGLML (61 aa). A DNA-binding region (H-T-H motif) is located at residues 33-52; it reads SLREVAREAGIAPTSFYRHF.

Homodimer.

The protein resides in the cytoplasm. Functionally, represses the transcription of fabB, involved in unsaturated fatty acid (UFA) biosynthesis. By controlling UFA production, FabR directly influences the physical properties of the membrane bilayer. In Shigella boydii serotype 18 (strain CDC 3083-94 / BS512), this protein is HTH-type transcriptional repressor FabR.